The primary structure comprises 135 residues: NADPH-dependent 7-cyano-7-deazaguanine reductase (135 aa).

Cys-48 (thioimide intermediate) is an active-site residue. The active-site Proton donor is the Asp-55. Substrate contacts are provided by residues 70 to 72 and 89 to 90; these read IEL and HE.

The protein belongs to the GTP cyclohydrolase I family. QueF type 1 subfamily.

The protein resides in the cytoplasm. It carries out the reaction 7-aminomethyl-7-carbaguanine + 2 NADP(+) = 7-cyano-7-deazaguanine + 2 NADPH + 3 H(+). Its pathway is tRNA modification; tRNA-queuosine biosynthesis. Catalyzes the NADPH-dependent reduction of 7-cyano-7-deazaguanine (preQ0) to 7-aminomethyl-7-deazaguanine (preQ1). This Prochlorococcus marinus (strain MIT 9303) protein is NADPH-dependent 7-cyano-7-deazaguanine reductase.